Reading from the N-terminus, the 375-residue chain is Anhydro-N-acetylmuramic acid kinase (375 aa).

12–19 (GTSMDGVD) contributes to the ATP binding site.

The protein belongs to the anhydro-N-acetylmuramic acid kinase family.

The catalysed reaction is 1,6-anhydro-N-acetyl-beta-muramate + ATP + H2O = N-acetyl-D-muramate 6-phosphate + ADP + H(+). The protein operates within amino-sugar metabolism; 1,6-anhydro-N-acetylmuramate degradation. Its pathway is cell wall biogenesis; peptidoglycan recycling. Catalyzes the specific phosphorylation of 1,6-anhydro-N-acetylmuramic acid (anhMurNAc) with the simultaneous cleavage of the 1,6-anhydro ring, generating MurNAc-6-P. Is required for the utilization of anhMurNAc either imported from the medium or derived from its own cell wall murein, and thus plays a role in cell wall recycling. This chain is Anhydro-N-acetylmuramic acid kinase, found in Photobacterium profundum (strain SS9).